Reading from the N-terminus, the 593-residue chain is Polyphenol oxidase, chloroplastic (593 aa).

Residues 1-13 (MTSLSPPVVTTPT) are compositionally biased toward low complexity. Residues 1-34 (MTSLSPPVVTTPTVPNPATKPLSPFSQNNSQVSL) are disordered. Residues 1 to 89 (MTSLSPPVVT…GMGTDPFAFA (89 aa)) constitute a chloroplast transit peptide. Residues 24 to 34 (PFSQNNSQVSL) are compositionally biased toward polar residues. 2 disulfide bridges follow: Cys-100–Cys-115 and Cys-114–Cys-176. 6 residues coordinate Cu cation: His-175, His-196, His-205, His-327, His-331, and His-361. Positions 179–196 (CDGAYDQVGFPELELQIH) form a cross-link, 2'-(S-cysteinyl)-histidine (Cys-His).

Belongs to the tyrosinase family. Cu(2+) serves as cofactor.

The protein localises to the plastid. The protein resides in the chloroplast thylakoid lumen. It catalyses the reaction 2 catechol + O2 = 2 1,2-benzoquinone + 2 H2O. Functionally, catalyzes the oxidation of mono- and o-diphenols to o-diquinones. The polypeptide is Polyphenol oxidase, chloroplastic (Malus domestica (Apple)).